A 338-amino-acid chain; its full sequence is Lipoate-protein ligase A (338 aa).

Residues 29 to 216 (PATQRVLFLW…AFFAHYGERV (188 aa)) enclose the BPL/LPL catalytic domain. Residues R71, 76–79 (GAVF), and K134 contribute to the ATP site. K134 serves as a coordination point for (R)-lipoate.

This sequence belongs to the LplA family. In terms of assembly, monomer.

The protein localises to the cytoplasm. It catalyses the reaction L-lysyl-[lipoyl-carrier protein] + (R)-lipoate + ATP = N(6)-[(R)-lipoyl]-L-lysyl-[lipoyl-carrier protein] + AMP + diphosphate + H(+). Its pathway is protein modification; protein lipoylation via exogenous pathway; protein N(6)-(lipoyl)lysine from lipoate: step 1/2. It functions in the pathway protein modification; protein lipoylation via exogenous pathway; protein N(6)-(lipoyl)lysine from lipoate: step 2/2. Its function is as follows. Catalyzes both the ATP-dependent activation of exogenously supplied lipoate to lipoyl-AMP and the transfer of the activated lipoyl onto the lipoyl domains of lipoate-dependent enzymes. The protein is Lipoate-protein ligase A of Salmonella paratyphi B (strain ATCC BAA-1250 / SPB7).